Here is a 69-residue protein sequence, read N- to C-terminus: Large ribosomal subunit protein bL28 (69 aa).

Residues 1-27 are disordered; sequence MSRRCSVSGKGPLVGNNVSHANNKTKR.

The protein belongs to the bacterial ribosomal protein bL28 family.

The chain is Large ribosomal subunit protein bL28 from Sulfurovum sp. (strain NBC37-1).